The sequence spans 235 residues: C-type lectin domain family 2 member D-related protein (235 aa).

Residues 1-50 (MPSSAHLQDPPPHLSRTLTQDEEQTSLRQSSSCGPSTTSASASESLSGST) are disordered. The Cytoplasmic segment spans residues 1–75 (MPSSAHLQDP…KIIPTESAAK (75 aa)). The segment covering 30 to 50 (SSSCGPSTTSASASESLSGST) has biased composition (low complexity). The chain crosses the membrane as a helical; Signal-anchor for type II membrane protein span at residues 76–96 (LLCCYAVFMALTVVVIALSIA). Residues 97–235 (LSVKKTPQIS…KLNSYTSQCP (139 aa)) lie on the Extracellular side of the membrane. In terms of domain architecture, C-type lectin spans 121 to 232 (FGNKCYYFNE…ICSKLNSYTS (112 aa)). N134 carries N-linked (GlcNAc...) asparagine glycosylation.

The protein localises to the cell membrane. Its function is as follows. Lectin-type cell surface receptor. The polypeptide is C-type lectin domain family 2 member D-related protein (Rattus norvegicus (Rat)).